Reading from the N-terminus, the 373-residue chain is Putative glutamate--cysteine ligase 2-1 (373 aa).

This sequence belongs to the glutamate--cysteine ligase type 2 family. YbdK subfamily.

The catalysed reaction is L-cysteine + L-glutamate + ATP = gamma-L-glutamyl-L-cysteine + ADP + phosphate + H(+). Its function is as follows. ATP-dependent carboxylate-amine ligase which exhibits weak glutamate--cysteine ligase activity. In Legionella pneumophila (strain Paris), this protein is Putative glutamate--cysteine ligase 2-1.